The following is a 173-amino-acid chain: PTS system glucose-specific EIIA component (173 aa).

The PTS EIIA type-1 domain maps to 40–144; the sequence is DPTFAQKMMG…STVTPVVVTN (105 aa). The Zn(2+) site is built by His77 and His92. The active-site Tele-phosphohistidine intermediate; for EIIA activity is His92. Position 92 is a phosphohistidine; by HPr (His92).

In terms of assembly, heterodimer with glycerol kinase (glpk). The cofactor is Zn(2+).

It is found in the cytoplasm. Functionally, the phosphoenolpyruvate-dependent sugar phosphotransferase system (sugar PTS), a major carbohydrate active transport system, catalyzes the phosphorylation of incoming sugar substrates concomitantly with their translocation across the cell membrane. The enzyme II complex composed of PtsG and Crr is involved in glucose transport. This chain is PTS system glucose-specific EIIA component (crr), found in Halalkalibacterium halodurans (strain ATCC BAA-125 / DSM 18197 / FERM 7344 / JCM 9153 / C-125) (Bacillus halodurans).